Here is a 524-residue protein sequence, read N- to C-terminus: Serine/threonine-protein kinase PAK 2 (524 aa).

Positions 1-81 (MSDNGELEDK…PEISPPSDFE (81 aa)) are disordered. Residue Ser2 is modified to N-acetylserine. A phosphoserine mark is found at Ser2, Ser20, Ser55, and Ser58. Residue Thr60 is modified to Phosphothreonine. Lys62 bears the N6-acetyllysine mark. Ser64 carries the post-translational modification Phosphoserine. The segment covering 67 to 81 (KEKERPEISPPSDFE) has biased composition (basic and acidic residues). Residues 69–112 (KERPEISPPSDFEHTIHVGFDAVTGEFTGMPEQWARLLQTSNIT) are GTPase-binding. Residues 69–137 (KERPEISPPS…KFYDSNTVKQ (69 aa)) are autoregulatory region. In terms of domain architecture, CRIB spans 74 to 87 (ISPPSDFEHTIHVG). Residue Lys128 is modified to N6-acetyllysine. Thr134 is subject to Phosphothreonine. Tyr139 is subject to Phosphotyrosine. The residue at position 141 (Ser141) is a Phosphoserine. Thr143 carries the post-translational modification Phosphothreonine. Disordered stretches follow at residues 143-164 (TPPE…GTEA) and 169-188 (TEEE…PRPD). Ser152 carries the phosphoserine modification. Residues Thr154 and Thr169 each carry the phosphothreonine modification. Acidic residues predominate over residues 169–178 (TEEEDDDEET). A Phosphoserine modification is found at Ser197. A lipid anchor (N-myristoyl glycine; in form PAK-2p34) is attached at Gly213. Positions 245–251 (PKKKYTR) match the Nuclear localization signal motif. Residues 249 to 499 (YTRYEKIGQG…SAKELLQHPF (251 aa)) form the Protein kinase domain. Residues 255–263 (IGQGASGTV) and Lys278 each bind ATP. Arg367 (proton acceptor) is an active-site residue. Thr402 bears the Phosphothreonine; by autocatalysis mark.

The protein belongs to the protein kinase superfamily. STE Ser/Thr protein kinase family. STE20 subfamily. As to quaternary structure, interacts tightly with GTP-bound but not GDP-bound CDC42/p21 and RAC1. Interacts with SH3MD4. Interacts with SCRIB. Interacts with ARHGEF7 and GIT1. PAK-2p34 interacts with ARHGAP10. (Microbial infection) Interacts with and activated by HIV-1 Nef. In terms of processing, full-length PAK2 is autophosphorylated when activated by CDC42/p21. Following cleavage, both peptides, PAK-2p27 and PAK-2p34, become highly autophosphorylated, with PAK-2p27 being phosphorylated on serine and PAK-2p34 on threonine residues, respectively. Autophosphorylation of PAK-2p27 can occur in the absence of any effectors and is dependent on phosphorylation of Thr-402, because PAK-2p27 is acting as an exogenous substrate. During apoptosis proteolytically cleaved by caspase-3 or caspase-3-like proteases to yield active PAK-2p34. Post-translationally, ubiquitinated, leading to its proteasomal degradation. In terms of processing, PAK-2p34 is myristoylated. As to expression, ubiquitously expressed. Higher levels seen in skeletal muscle, ovary, thymus and spleen.

The protein localises to the cytoplasm. It is found in the nucleus. The protein resides in the perinuclear region. It localises to the membrane. It carries out the reaction L-seryl-[protein] + ATP = O-phospho-L-seryl-[protein] + ADP + H(+). The catalysed reaction is L-threonyl-[protein] + ATP = O-phospho-L-threonyl-[protein] + ADP + H(+). With respect to regulation, activated by binding small G proteins. Binding of GTP-bound CDC42 or RAC1 to the autoregulatory region releases monomers from the autoinhibited dimer, enables phosphorylation of Thr-402 and allows the kinase domain to adopt an active structure. Following caspase cleavage, autophosphorylated PAK-2p34 is constitutively active. Serine/threonine protein kinase that plays a role in a variety of different signaling pathways including cytoskeleton regulation, cell motility, cell cycle progression, apoptosis or proliferation. Acts as a downstream effector of the small GTPases CDC42 and RAC1. Activation by the binding of active CDC42 and RAC1 results in a conformational change and a subsequent autophosphorylation on several serine and/or threonine residues. Full-length PAK2 stimulates cell survival and cell growth. Phosphorylates MAPK4 and MAPK6 and activates the downstream target MAPKAPK5, a regulator of F-actin polymerization and cell migration. Phosphorylates JUN and plays an important role in EGF-induced cell proliferation. Phosphorylates many other substrates including histone H4 to promote assembly of H3.3 and H4 into nucleosomes, BAD, ribosomal protein S6, or MBP. Phosphorylates CASP7, thereby preventing its activity. Additionally, associates with ARHGEF7 and GIT1 to perform kinase-independent functions such as spindle orientation control during mitosis. On the other hand, apoptotic stimuli such as DNA damage lead to caspase-mediated cleavage of PAK2, generating PAK-2p34, an active p34 fragment that translocates to the nucleus and promotes cellular apoptosis involving the JNK signaling pathway. Caspase-activated PAK2 phosphorylates MKNK1 and reduces cellular translation. The polypeptide is Serine/threonine-protein kinase PAK 2 (PAK2) (Homo sapiens (Human)).